The following is a 276-amino-acid chain: MSNSGEDFQVVTRKKWMARKCLRRRDRHKSESDYLIDCPDVNVEKFQPRLENLCTEMCQSDYFLVAMEALQQQLEGIRKPLERIVCLGLGPFSRTYHALHQAAFVIGLHRHHKIREALYFDPVFRDSEKELIRLFDGCIMSKDCAGKHEATVPTLYYLPHCPYALMHNILWSNWKRETLPNVFLISNSFEMLTMTPRNQDDHITRIVEHCTETPLEDDYEHHNVFNDLSLHTFPQESLPGSNDEAFWTRCAPLKVNEDELITETETSLAALKLESE.

S30 carries the post-translational modification Phosphoserine. The residue at position 34 (Y34) is a Phosphotyrosine.

This sequence belongs to the SRR1 family.

In terms of biological role, possible regulator involved in a circadian clock input pathway. This Drosophila melanogaster (Fruit fly) protein is SRR1-like protein.